The following is a 1393-amino-acid chain: DNA-directed RNA polymerase subunit beta' (1393 aa).

The Zn(2+) site is built by C72, C74, C87, and C90. Positions 463, 465, and 467 each coordinate Mg(2+). The Zn(2+) site is built by C812, C887, C894, and C897.

It belongs to the RNA polymerase beta' chain family. As to quaternary structure, the RNAP catalytic core consists of 2 alpha, 1 beta, 1 beta' and 1 omega subunit. When a sigma factor is associated with the core the holoenzyme is formed, which can initiate transcription. The cofactor is Mg(2+). Zn(2+) is required as a cofactor.

The enzyme catalyses RNA(n) + a ribonucleoside 5'-triphosphate = RNA(n+1) + diphosphate. Functionally, DNA-dependent RNA polymerase catalyzes the transcription of DNA into RNA using the four ribonucleoside triphosphates as substrates. The sequence is that of DNA-directed RNA polymerase subunit beta' from Chlamydia caviae (strain ATCC VR-813 / DSM 19441 / 03DC25 / GPIC) (Chlamydophila caviae).